Reading from the N-terminus, the 73-residue chain is Putative defensin-like protein 57 (73 aa).

Positions 1-25 (MRFTSMIFVLVVILINSLFNFNVLA) are cleaved as a signal peptide. Cystine bridges form between Cys37–Cys71, Cys41–Cys64, Cys50–Cys69, and Cys54–Cys70.

The protein belongs to the DEFL family.

It is found in the secreted. This Arabidopsis thaliana (Mouse-ear cress) protein is Putative defensin-like protein 57.